The sequence spans 253 residues: Ubiquinone/menaquinone biosynthesis C-methyltransferase UbiE (253 aa).

S-adenosyl-L-methionine-binding positions include Thr-76, Asp-97, 125–126 (NA), and Ser-142.

The protein belongs to the class I-like SAM-binding methyltransferase superfamily. MenG/UbiE family.

It carries out the reaction a 2-demethylmenaquinol + S-adenosyl-L-methionine = a menaquinol + S-adenosyl-L-homocysteine + H(+). The enzyme catalyses a 2-methoxy-6-(all-trans-polyprenyl)benzene-1,4-diol + S-adenosyl-L-methionine = a 5-methoxy-2-methyl-3-(all-trans-polyprenyl)benzene-1,4-diol + S-adenosyl-L-homocysteine + H(+). The protein operates within quinol/quinone metabolism; menaquinone biosynthesis; menaquinol from 1,4-dihydroxy-2-naphthoate: step 2/2. It functions in the pathway cofactor biosynthesis; ubiquinone biosynthesis. In terms of biological role, methyltransferase required for the conversion of demethylmenaquinol (DMKH2) to menaquinol (MKH2) and the conversion of 2-polyprenyl-6-methoxy-1,4-benzoquinol (DDMQH2) to 2-polyprenyl-3-methyl-6-methoxy-1,4-benzoquinol (DMQH2). This is Ubiquinone/menaquinone biosynthesis C-methyltransferase UbiE from Xylella fastidiosa (strain M23).